The following is a 301-amino-acid chain: Ribosomal RNA small subunit methyltransferase A (301 aa).

Positions 23, 25, 50, 72, 97, and 149 each coordinate S-adenosyl-L-methionine.

Belongs to the class I-like SAM-binding methyltransferase superfamily. rRNA adenine N(6)-methyltransferase family. RsmA subfamily.

It localises to the cytoplasm. The catalysed reaction is adenosine(1518)/adenosine(1519) in 16S rRNA + 4 S-adenosyl-L-methionine = N(6)-dimethyladenosine(1518)/N(6)-dimethyladenosine(1519) in 16S rRNA + 4 S-adenosyl-L-homocysteine + 4 H(+). Its function is as follows. Specifically dimethylates two adjacent adenosines (A1518 and A1519) in the loop of a conserved hairpin near the 3'-end of 16S rRNA in the 30S particle. May play a critical role in biogenesis of 30S subunits. This Rickettsia peacockii (strain Rustic) protein is Ribosomal RNA small subunit methyltransferase A.